The primary structure comprises 31 residues: HYYDDTDEEERIVSTVDARGHRPLDKKREEA.

Residues 1–10 (HYYDDTDEEE) show a composition bias toward acidic residues. Residues 1–31 (HYYDDTDEEERIVSTVDARGHRPLDKKREEA) form a disordered region. Tyrosine 2 carries the post-translational modification Sulfotyrosine; partial. Tyrosine 3 bears the Sulfotyrosine mark. The segment covering 18-31 (ARGHRPLDKKREEA) has biased composition (basic and acidic residues).

In terms of assembly, heterohexamer; disulfide linked. Contains 2 sets of 3 non-identical chains (alpha, beta and gamma). The 2 heterotrimers are in head to head conformation with the N-termini in a small central domain. In terms of processing, conversion of fibrinogen to fibrin is triggered by thrombin, which cleaves fibrinopeptides A and B from alpha and beta chains, and thus exposes the N-terminal polymerization sites responsible for the formation of the soft clot.

Its subcellular location is the secreted. Its function is as follows. Cleaved by the protease thrombin to yield monomers which, together with fibrinogen alpha (FGA) and fibrinogen gamma (FGG), polymerize to form an insoluble fibrin matrix. Fibrin has a major function in hemostasis as one of the primary components of blood clots. In addition, functions during the early stages of wound repair to stabilize the lesion and guide cell migration during re-epithelialization. Was originally thought to be essential for platelet aggregation, based on in vitro studies using anticoagulated blood. However subsequent studies have shown that it is not absolutely required for thrombus formation in vivo. Enhances expression of SELP in activated platelets. Maternal fibrinogen is essential for successful pregnancy. Fibrin deposition is also associated with infection, where it protects against IFNG-mediated hemorrhage. May also facilitate the antibacterial immune response via both innate and T-cell mediated pathways. The protein is Fibrinogen beta chain (FGB) of Canis lupus familiaris (Dog).